A 555-amino-acid polypeptide reads, in one-letter code: Transmembrane protein 87B (555 aa).

Residues 1–42 (MVAACRSVAGLLPRRRRCFPARAPLLRVALCLLCWTPAAVRA) form the signal peptide. The Lumenal portion of the chain corresponds to 43-214 (VPELGLWLET…PHGYISASDW (172 aa)). Asn68 and Asn197 each carry an N-linked (GlcNAc...) asparagine glycan. Residues 215 to 235 (PLMIFYMVMCIVYILYGILWL) traverse the membrane as a helical segment. At 236–247 (TWSACYWKDILR) the chain is on the cytoplasmic side. The chain crosses the membrane as a helical span at residues 248–268 (IQFWIAAVIFLGMLEKAVFYS). Topologically, residues 269-299 (EYQNISNTGLSTQGLLIFAELISAIKRTLAR) are lumenal. A glycan (N-linked (GlcNAc...) asparagine) is linked at Asn272. A helical membrane pass occupies residues 300–320 (LLVIIVSLGYGIVKPRLGTVM). Residues 321 to 322 (HR) are Cytoplasmic-facing. Residues 323–343 (VIGLGLLYLIFAAVEGVMRVI) form a helical membrane-spanning segment. Over 344-350 (GGSNHLA) the chain is Lumenal. Residues 351–371 (VVLDDIILAVIDSIFVWFIFI) form a helical membrane-spanning segment. Residues 372 to 396 (SLAQTMKTLRLRKNTVKFSLYRHFK) lie on the Cytoplasmic side of the membrane. A helical transmembrane segment spans residues 397–417 (NTLIFAVLASIVFMGWTTKTF). Residues 418 to 429 (RIAKCQSDWMER) lie on the Lumenal side of the membrane. The helical transmembrane segment at 430–450 (WVDDAFWSFLFSLILIVIMFL) threads the bilayer. Over 451–555 (WRPSANNQRY…EKMFSSEKIM (105 aa)) the chain is Cytoplasmic. Residues Ser469, Ser494, Ser496, and Ser534 each carry the phosphoserine modification.

Belongs to the LU7TM family. TMEM87 subfamily.

It is found in the golgi apparatus membrane. In terms of biological role, may be involved in retrograde transport from endosomes to the trans-Golgi network (TGN). The chain is Transmembrane protein 87B from Homo sapiens (Human).